The primary structure comprises 985 residues: Coiled-coil domain-containing protein 33 (985 aa).

The tract at residues 228–263 (MSPFSTDSDQEGLSWEAGPWQHPAQVPEEPQGRLDT) is disordered. Positions 263–398 (TSQDPYPAAN…VFLRGVNEPL (136 aa)) constitute a C2 domain. A coiled-coil region spans residues 599–745 (VEMNNYRRAM…LEERLCERKE (147 aa)). Residues 821 to 842 (AERLQDTNGPGHPKSTETLPAQ) are disordered. Residues 885 to 928 (DKFNLLAKLEQAQSRILSLENQLEESARHWAREKQNLAIRLQEQ) are a coiled coil. The interval 931–985 (GFGQPPNSIIIDQPNAGASKNPQQLSKLEPSLPSSDKKLNRPSDSQIEISNNQKT) is disordered. Polar residues-rich tracts occupy residues 946 to 956 (AGASKNPQQLS) and 972 to 985 (PSDS…NQKT).

The sequence is that of Coiled-coil domain-containing protein 33 (Ccdc33) from Mus musculus (Mouse).